Consider the following 49-residue polypeptide: Large ribosomal subunit protein bL33B (49 aa).

Belongs to the bacterial ribosomal protein bL33 family.

In Bacillus pumilus (strain SAFR-032), this protein is Large ribosomal subunit protein bL33B.